Here is a 362-residue protein sequence, read N- to C-terminus: RNA-binding protein 4 (362 aa).

2 consecutive RRM domains span residues 2-72 (VKLF…ASKN) and 78-148 (TKLH…LSTS). Residue lysine 79 forms a Glycyl lysine isopeptide (Lys-Gly) (interchain with G-Cter in SUMO2) linkage. Serine 86 carries the phosphoserine modification. Residue lysine 92 forms a Glycyl lysine isopeptide (Lys-Gly) (interchain with G-Cter in SUMO2) linkage. The segment at 160 to 177 (SGCYRCGKEGHWSKECPV) adopts a CCHC-type zinc-finger fold. The interaction with TNPO3 stretch occupies residues 196–362 (AVRTPYTMGY…YADRARYSAF (167 aa)). Residues 306–336 (RSPLRRATGPVPTVGEGYGYGHESELSQGSS) are disordered. Residue serine 307 is modified to Phosphoserine.

As to quaternary structure, interacts with TNPO3; the interaction mediates nuclear import of the protein and is disrupted by nuclear Ran bound to GTP. Interacts with EIF4G1 and WT1. Interacts with EIF4A1; the interaction is modulated under stress-induced conditions. Interacts with AGO1. Interacts with AGO2; the interaction occurs under both cell proliferation and differentiation conditions and in an RNA- and phosphorylation-independent manner. Interacts with DDX5; the interaction occurs in an RNA-independent manner. Interacts with RBPMS; the interaction allows cooperative assembly of RNA-bound stable cell-specific alternative splicing regulatory complexes. Post-translationally, phosphorylated. Phosphorylated in vitro on Ser-307 by SRPK1. Phosphorylation on Ser-307 is induced upon cell stress signaling, which alters its subcellular localization and may modulate its activity on IRES-mediated mRNA translation. Phosphorylation on Ser-307 is induced upon cell muscle differentiation.

It localises to the nucleus. The protein resides in the nucleolus. The protein localises to the nucleus speckle. Its subcellular location is the cytoplasm. It is found in the cytoplasmic granule. Its function is as follows. RNA-binding factor involved in multiple aspects of cellular processes like alternative splicing of pre-mRNA and translation regulation. Modulates alternative 5'-splice site and exon selection. Acts as a muscle cell differentiation-promoting factor. Activates exon skipping of the PTB pre-mRNA during muscle cell differentiation. Antagonizes the activity of the splicing factor PTBP1 to modulate muscle cell-specific exon selection of alpha tropomyosin. Binds to intronic pyrimidine-rich sequence of the TPM1 and MAPT pre-mRNAs. Required for the translational activation of PER1 mRNA in response to circadian clock. Binds directly to the 3'-UTR of the PER1 mRNA. Exerts a suppressive activity on Cap-dependent translation via binding to CU-rich responsive elements within the 3'UTR of mRNAs, a process increased under stress conditions or during myocytes differentiation. Recruits EIF4A1 to stimulate IRES-dependent translation initiation in respons to cellular stress. Associates to internal ribosome entry segment (IRES) in target mRNA species under stress conditions. Plays a role for miRNA-guided RNA cleavage and translation suppression by promoting association of AGO2-containing miRNPs with their cognate target mRNAs. Associates with miRNAs during muscle cell differentiation. Binds preferentially to 5'-CGCGCG[GCA]-3' motif in vitro. The chain is RNA-binding protein 4 (RBM4) from Bos taurus (Bovine).